We begin with the raw amino-acid sequence, 375 residues long: Alcohol dehydrogenase 1A (375 aa).

Residue serine 2 is modified to N-acetylserine. Phosphoserine is present on serine 23. Cysteine 47 provides a ligand contact to Zn(2+). Glycine 48 to histidine 52 is a binding site for NAD(+). Zn(2+)-binding residues include histidine 68, cysteine 98, cysteine 101, cysteine 104, cysteine 112, and cysteine 175. NAD(+) is bound by residues glycine 200 to glycine 205, aspartate 224, lysine 229, isoleucine 270, valine 293 to valine 295, alanine 318 to leucine 320, and arginine 370.

It belongs to the zinc-containing alcohol dehydrogenase family. In terms of assembly, dimer of identical or heterodimer of closely related subunits alpha, beta, or gamma that are encoded by genes ADH1A, ADH1B, and ADH1C, respectively. Zn(2+) is required as a cofactor.

Its subcellular location is the cytoplasm. It carries out the reaction a primary alcohol + NAD(+) = an aldehyde + NADH + H(+). The catalysed reaction is a secondary alcohol + NAD(+) = a ketone + NADH + H(+). It catalyses the reaction butan-1-ol + NAD(+) = butanal + NADH + H(+). The enzyme catalyses 1-propanol + NAD(+) = propanal + NADH + H(+). In terms of biological role, alcohol dehydrogenase. Oxidizes primary as well as secondary alcohols. Ethanol is a very poor substrate. This chain is Alcohol dehydrogenase 1A (ADH1A), found in Homo sapiens (Human).